Here is a 380-residue protein sequence, read N- to C-terminus: GDSL esterase/lipase At3g26430 (380 aa).

A signal peptide spans 1-25 (METNLLLVKCVLLASCLIHPRACSP). The Nucleophile role is filled by Ser38. Asn97, Asn115, and Asn183 each carry an N-linked (GlcNAc...) asparagine glycan. Active-site residues include Asp346 and His349.

It belongs to the 'GDSL' lipolytic enzyme family.

The protein localises to the secreted. The catalysed reaction is hexadecanoate ester + H2O = an aliphatic alcohol + hexadecanoate + H(+). The enzyme catalyses a butanoate ester + H2O = an aliphatic alcohol + butanoate + H(+). With respect to regulation, lipase activity is inhibited by phenylmethylsulfonyl fluoride (PMSF), but not neostigmine bromide (NB). Its function is as follows. Lipase that can hydrolyze p-nitrophenyl butyrate and p-nitrophenyl palmitate in vitro. Possesses low activity against p-nitrophenyl acetate. Substrate preference is p-nitrophenyl palmitate &gt; p-nitrophenyl butyrate &gt;&gt; p-nitrophenyl acetate. Lacks cholinesterase activity. This is GDSL esterase/lipase At3g26430 from Arabidopsis thaliana (Mouse-ear cress).